Consider the following 222-residue polypeptide: MKVLILACLVALAIAREQEELNVVGETVESLSSSEESITHINKKIEKFQSEEQQQTEDELQDKIHPFAQAQSLVYPFTGPIPNSLPQNILPLTQTPVVVPPFLQPEIMGVPKVKETMVPKHKEMPFPKYPVEPFTESQSLTLTDVEKLHLPLPLVQSWMHQPPQPLSPTVMFPPQSVLSLSQPKVLPVPQKAVPQRDMPIQAFLLYQEPVLGPVRGPFPILV.

The signal sequence occupies residues 1-15 (MKVLILACLVALAIA). A Phosphothreonine modification is found at T27. Phosphoserine is present on residues S30, S32, S33, and S34.

This sequence belongs to the beta-casein family. Mammary gland specific. Secreted in milk.

It is found in the secreted. Functionally, important role in determination of the surface properties of the casein micelles. This is Beta-casein (CSN2) from Capra hircus (Goat).